The following is a 63-amino-acid chain: 2-hydroxymuconate tautomerase (63 aa).

Catalysis depends on Pro2, which acts as the Proton acceptor; via imino nitrogen.

The protein belongs to the 4-oxalocrotonate tautomerase family. As to quaternary structure, homohexamer.

It catalyses the reaction (2Z,4E)-2-hydroxyhexa-2,4-dienedioate = (3E)-2-oxohex-3-enedioate. The protein operates within xenobiotic degradation; toluene degradation. In terms of biological role, catalyzes the ketonization of 2-hydroxymuconate stereoselectively to yield 2-oxo-3-hexenedioate. This is 2-hydroxymuconate tautomerase (dmpI) from Pseudomonas sp. (strain CF600).